We begin with the raw amino-acid sequence, 147 residues long: Basic phospholipase A2 beta-bungarotoxin A1 chain (147 aa).

The first 19 residues, 1–19 (MNPAHLLVLSAVCVSLLGA), serve as a signal peptide directing secretion. A propeptide spanning residues 20-27 (ANIPPHPL) is cleaved from the precursor. 6 cysteine pairs are disulfide-bonded: C54/C146, C56/C72, C71/C127, C78/C120, C88/C113, and C106/C118. The Ca(2+) site is built by Y55, G57, and G59. The active site involves H75. D76 contacts Ca(2+). The active site involves D121.

The protein belongs to the phospholipase A2 family. Group I subfamily. D49 sub-subfamily. As to quaternary structure, heterodimer; disulfide-linked. The A chains have phospholipase A2 activity and the B chains show homology with the basic protease inhibitors. The A1 chain is found in beta-1 and beta-2 bungarotoxins. Requires Ca(2+) as cofactor. As to expression, expressed by the venom gland.

Its subcellular location is the secreted. It carries out the reaction a 1,2-diacyl-sn-glycero-3-phosphocholine + H2O = a 1-acyl-sn-glycero-3-phosphocholine + a fatty acid + H(+). Snake venom phospholipase A2 (PLA2) that inhibits neuromuscular transmission by blocking acetylcholine release from the nerve termini. PLA2 catalyzes the calcium-dependent hydrolysis of the 2-acyl groups in 3-sn-phosphoglycerides. This chain is Basic phospholipase A2 beta-bungarotoxin A1 chain, found in Bungarus multicinctus (Many-banded krait).